The sequence spans 61 residues: uncharacterized protein (61 aa).

Positions 38-61 (TPRPFTPGLADPRRLGPRRVQAAQ) are disordered.

This is an uncharacterized protein from Homo sapiens (Human).